The following is a 27-amino-acid chain: Zinc metalloproteinase multactivase catalytic subunit (27 aa).

A Peptidase M12B domain is found at 12–27 (FIELVIIVDHSXXTYK). Position 14 (Glu14) interacts with Ca(2+).

It belongs to the venom metalloproteinase (M12B) family. P-III subfamily. P-IIId sub-subfamily. As to quaternary structure, heterodimer of a metalloproteinase subunit and a regulatory subunit comprising two homologous disulfide-linked lectins (AC P81798). The cofactor is Zn(2+). Expressed by the venom gland.

The protein localises to the secreted. This carinactivase-like calcium-dependent prothrombin (F2) activator activates prothrombin via recognition of the calcium ion bound conformation of its gamma-carboxyglutamic acid (GLA) domain, and the subsequent conversion of prothrombin to active thrombin is catalyzed by the catalytic subunit. The chain is Zinc metalloproteinase multactivase catalytic subunit from Echis multisquamatus (Central Asian sand viper).